We begin with the raw amino-acid sequence, 159 residues long: Putative ribosomal RNA large subunit methyltransferase H (159 aa).

Residues Leu76, Gly108, and 127-132 (FSKMTF) each bind S-adenosyl-L-methionine.

This sequence belongs to the RNA methyltransferase RlmH family.

The protein resides in the cytoplasm. The enzyme catalyses pseudouridine(1915) in 23S rRNA + S-adenosyl-L-methionine = N(3)-methylpseudouridine(1915) in 23S rRNA + S-adenosyl-L-homocysteine + H(+). Functionally, specifically methylates the pseudouridine at position 1915 (m3Psi1915) in 23S rRNA. This chain is Putative ribosomal RNA large subunit methyltransferase H, found in Methanococcus maripaludis (strain C5 / ATCC BAA-1333).